A 336-amino-acid polypeptide reads, in one-letter code: MEDLQLVLFVLGAIAIIAVLVHGFWSIRKQQPKPIKERTRAQNISEAQRRDSQGFDADGIGAVRVRKPGTEDLPSSRNHTSVPVMTLQKASATDAGVASSHGYSPERTTAERAEPVRAERAATNATVAGSMNTQPVTPQPASYGVQGVTAEVKQSVEPQTITPSQHVHIESPKYGATTQASPQPASPVQSQAPREPEPLGEPQDVLVLHVVAHEGQEIQGAELLPCLLSLNFKFGDMNIFHRHSDNAGNGKVLFSLANMMKPGVFDPDNMEQFCTQGIVMFMTLPCHGEAQHNFSIMLNSAEQLADDLGAIVLDEQRKVWTEHNKQDYLRRIKAIV.

Topologically, residues 1 to 6 (MEDLQL) are periplasmic. A helical transmembrane segment spans residues 7-27 (VLFVLGAIAIIAVLVHGFWSI). The Cytoplasmic segment spans residues 28-336 (RKQQPKPIKE…DYLRRIKAIV (309 aa)). Disordered regions lie at residues 31–118 (QPKP…PVRA) and 174–200 (YGAT…EPLG). Polar residues predominate over residues 73 to 91 (LPSSRNHTSVPVMTLQKAS). A compositionally biased stretch (basic and acidic residues) spans 108–118 (TTAERAEPVRA). The segment covering 179 to 193 (QASPQPASPVQSQAP) has biased composition (low complexity).

Belongs to the ZipA family. As to quaternary structure, interacts with FtsZ via their C-terminal domains.

It is found in the cell inner membrane. Essential cell division protein that stabilizes the FtsZ protofilaments by cross-linking them and that serves as a cytoplasmic membrane anchor for the Z ring. Also required for the recruitment to the septal ring of downstream cell division proteins. The chain is Cell division protein ZipA from Shewanella denitrificans (strain OS217 / ATCC BAA-1090 / DSM 15013).